A 232-amino-acid polypeptide reads, in one-letter code: Phosphatidylserine decarboxylase proenzyme (232 aa).

Residue serine 190 is the Schiff-base intermediate with substrate; via pyruvic acid of the active site. Serine 190 carries the post-translational modification Pyruvic acid (Ser); by autocatalysis.

The protein belongs to the phosphatidylserine decarboxylase family. PSD-A subfamily. Heterodimer of a large membrane-associated beta subunit and a small pyruvoyl-containing alpha subunit. Pyruvate serves as cofactor. In terms of processing, is synthesized initially as an inactive proenzyme. Formation of the active enzyme involves a self-maturation process in which the active site pyruvoyl group is generated from an internal serine residue via an autocatalytic post-translational modification. Two non-identical subunits are generated from the proenzyme in this reaction, and the pyruvate is formed at the N-terminus of the alpha chain, which is derived from the carboxyl end of the proenzyme. The post-translation cleavage follows an unusual pathway, termed non-hydrolytic serinolysis, in which the side chain hydroxyl group of the serine supplies its oxygen atom to form the C-terminus of the beta chain, while the remainder of the serine residue undergoes an oxidative deamination to produce ammonia and the pyruvoyl prosthetic group on the alpha chain.

Its subcellular location is the cell membrane. The enzyme catalyses a 1,2-diacyl-sn-glycero-3-phospho-L-serine + H(+) = a 1,2-diacyl-sn-glycero-3-phosphoethanolamine + CO2. Its pathway is phospholipid metabolism; phosphatidylethanolamine biosynthesis; phosphatidylethanolamine from CDP-diacylglycerol: step 2/2. Functionally, catalyzes the formation of phosphatidylethanolamine (PtdEtn) from phosphatidylserine (PtdSer). This Bradyrhizobium sp. (strain BTAi1 / ATCC BAA-1182) protein is Phosphatidylserine decarboxylase proenzyme.